A 299-amino-acid polypeptide reads, in one-letter code: Acetyl-hydrolase (299 aa).

The Involved in the stabilization of the negatively charged intermediate by the formation of the oxyanion hole signature appears at 73-75 (HGG). Active-site residues include S143, E237, and H267.

It belongs to the 'GDXG' lipolytic enzyme family.

It functions in the pathway secondary metabolite biosynthesis; bialaphos biosynthesis. This protein removes the N-acetyl group from bialaphos as one of the final steps of biosynthesis of phosphinothricin tripeptide (PTT), also known as bialaphos (BA), a natural-product antibiotic and potent herbicide. This chain is Acetyl-hydrolase (bah), found in Streptomyces hygroscopicus.